The chain runs to 351 residues: Dihydroorotate dehydrogenase (quinone) (351 aa).

Residues 61 to 65 and Thr85 contribute to the FMN site; that span reads AGLDK. Lys65 is a substrate binding site. 110-114 lines the substrate pocket; the sequence is NRMGF. The FMN site is built by Asn139 and Asn172. Asn172 is a binding site for substrate. The Nucleophile role is filled by Ser175. Position 177 (Asn177) interacts with substrate. Residues Lys217 and Thr245 each contribute to the FMN site. Substrate is bound at residue 246-247; that stretch reads NT. Residues Gly268, Gly297, and 318–319 contribute to the FMN site; that span reads YS.

It belongs to the dihydroorotate dehydrogenase family. Type 2 subfamily. Monomer. FMN is required as a cofactor.

The protein resides in the cell membrane. It catalyses the reaction (S)-dihydroorotate + a quinone = orotate + a quinol. It functions in the pathway pyrimidine metabolism; UMP biosynthesis via de novo pathway; orotate from (S)-dihydroorotate (quinone route): step 1/1. Its function is as follows. Catalyzes the conversion of dihydroorotate to orotate with quinone as electron acceptor. The protein is Dihydroorotate dehydrogenase (quinone) of Stenotrophomonas maltophilia (strain K279a).